A 90-amino-acid polypeptide reads, in one-letter code: U7-theraphotoxin-Hhn1a 1 (90 aa).

The N-terminal stretch at 1–19 is a signal peptide; sequence MKTAIFTVVLALAVFAVLS. The propeptide occupies 20–50; the sequence is FGWEANEKALSEEFTELIHEKEAASETEARE. Cystine bridges form between Cys51/Cys65, Cys58/Cys70, and Cys64/Cys81.

Belongs to the neurotoxin 10 (Hwtx-1) family. 13 (Hntx-13) subfamily. As to expression, expressed by the venom gland.

It is found in the secreted. Functionally, ion channel inhibitor. The protein is U7-theraphotoxin-Hhn1a 1 of Cyriopagopus hainanus (Chinese bird spider).